The primary structure comprises 338 residues: Fructose-1,6-bisphosphatase class 1 (338 aa).

Glu91, Asp113, Leu115, and Asp116 together coordinate Mg(2+). Substrate-binding positions include Asp116–Ser119, Asn211, Tyr244, and Lys277. Glu283 is a Mg(2+) binding site.

This sequence belongs to the FBPase class 1 family. Homotetramer. Mg(2+) serves as cofactor.

The protein localises to the cytoplasm. It carries out the reaction beta-D-fructose 1,6-bisphosphate + H2O = beta-D-fructose 6-phosphate + phosphate. Its pathway is carbohydrate biosynthesis; gluconeogenesis. This is Fructose-1,6-bisphosphatase class 1 from Oleidesulfovibrio alaskensis (strain ATCC BAA-1058 / DSM 17464 / G20) (Desulfovibrio alaskensis).